A 549-amino-acid chain; its full sequence is Elongator complex protein 3 (549 aa).

In terms of domain architecture, Radical SAM core spans 84–374; sequence RTASGIAVVA…YRVQRDIPMP (291 aa). [4Fe-4S] cluster-binding residues include Cys-101, Cys-111, and Cys-114. Acetyl-CoA is bound by residues Lys-166, 476 to 479, 499 to 501, and Tyr-532; these read ELHV and FGM. Residues 398–549 enclose the N-acetyltransferase domain; sequence TECRDVRTRE…EGPYMVKKLD (152 aa).

It belongs to the ELP3 family. In terms of assembly, component of the elongator complex. Interacts with transcriptional repressors snai1 and snai2; interaction with snai1 inhibits its ubiquitination and stabilizes it. The cofactor is [4Fe-4S] cluster.

Its subcellular location is the cytoplasm. It is found in the nucleus. It carries out the reaction uridine(34) in tRNA + acetyl-CoA + S-adenosyl-L-methionine + H2O = 5-(carboxymethyl)uridine(34) in tRNA + 5'-deoxyadenosine + L-methionine + CoA + 2 H(+). Its pathway is tRNA modification; 5-methoxycarbonylmethyl-2-thiouridine-tRNA biosynthesis. Functionally, catalytic tRNA acetyltransferase subunit of the elongator complex which is required for multiple tRNA modifications, including mcm5U (5-methoxycarbonylmethyl uridine), mcm5s2U (5-methoxycarbonylmethyl-2-thiouridine), and ncm5U (5-carbamoylmethyl uridine). In the elongator complex, acts as a tRNA uridine(34) acetyltransferase by mediating formation of carboxymethyluridine in the wobble base at position 34 in tRNAs. Stabilizes transcriptional repressor snai1 by inhibiting its ubiquitination which promotes neural crest cell migration. The chain is Elongator complex protein 3 from Xenopus tropicalis (Western clawed frog).